The following is a 428-amino-acid chain: Cell division cycle 20.6, cofactor of APC complex (428 aa).

WD repeat units lie at residues 106–145 (WFLTDNLVFFFVDIEEYIVIEQLGDTVYLWDASSCYTSKL), 150–189 (DENGPVTSINWTQDGLDLAVGLDNSEVQVWDCVSNRHVRT), 193–230 (GHESRVGSLAWNNHILTTGGMDGKIVNNDVRIRSSIIG), 234–273 (GHTEEVCGLKWSESGKKLASGGNDNVVHIWDRSLASSNPT), 282–324 (EHTA…CLNS), 326–367 (ETGS…KMAE), and 370–409 (GHTSRVLFMAQSPDGCTVASAAGDETLRLWNVFGEPPKTT).

This sequence belongs to the WD repeat CDC20/Fizzy family. As to quaternary structure, the APC/C is composed of at least 11 subunits that stay tightly associated throughout the cell cycle.

The protein localises to the nucleus. Its pathway is protein modification; protein ubiquitination. Component of the anaphase promoting complex/cyclosome (APC/C), a cell cycle-regulated E3 ubiquitin-protein ligase complex that controls progression through mitosis and the G1 phase of the cell cycle. The protein is Cell division cycle 20.6, cofactor of APC complex (CDC20-6) of Arabidopsis thaliana (Mouse-ear cress).